Reading from the N-terminus, the 900-residue chain is Trehalose-phosphatase (900 aa).

2 disordered regions span residues 76–109 (SRLFNSKNRDKSENGEKGENDLHAKEEREKEEDP) and 874–900 (VKHSDSSIRSEQASARYAMKRQQSYKN). A compositionally biased stretch (basic and acidic residues) spans 82–108 (KNRDKSENGEKGENDLHAKEEREKEED).

In the C-terminal section; belongs to the trehalose phosphatase family. This sequence in the N-terminal section; belongs to the glycosyltransferase 20 family. Requires Mg(2+) as cofactor.

It carries out the reaction alpha,alpha-trehalose 6-phosphate + H2O = alpha,alpha-trehalose + phosphate. The protein operates within carbohydrate biosynthesis. In terms of biological role, phosphatase catalytic subunit of the trehalose synthase complex that catalyzes the production of trehalose from glucose-6-phosphate and UDP-alpha-D-glucose in a two step process. In Zygosaccharomyces rouxii, this protein is Trehalose-phosphatase.